The primary structure comprises 89 residues: Small ribosomal subunit protein uS15 (89 aa).

The protein belongs to the universal ribosomal protein uS15 family. In terms of assembly, part of the 30S ribosomal subunit. Forms a bridge to the 50S subunit in the 70S ribosome, contacting the 23S rRNA.

Its function is as follows. One of the primary rRNA binding proteins, it binds directly to 16S rRNA where it helps nucleate assembly of the platform of the 30S subunit by binding and bridging several RNA helices of the 16S rRNA. In terms of biological role, forms an intersubunit bridge (bridge B4) with the 23S rRNA of the 50S subunit in the ribosome. This Thermus thermophilus (strain ATCC BAA-163 / DSM 7039 / HB27) protein is Small ribosomal subunit protein uS15.